A 136-amino-acid chain; its full sequence is ATP synthase epsilon chain (136 aa).

It belongs to the ATPase epsilon chain family. As to quaternary structure, F-type ATPases have 2 components, CF(1) - the catalytic core - and CF(0) - the membrane proton channel. CF(1) has five subunits: alpha(3), beta(3), gamma(1), delta(1), epsilon(1). CF(0) has three main subunits: a, b and c.

Its subcellular location is the cell inner membrane. Its function is as follows. Produces ATP from ADP in the presence of a proton gradient across the membrane. The protein is ATP synthase epsilon chain of Persephonella marina (strain DSM 14350 / EX-H1).